The chain runs to 278 residues: Phosphonates import ATP-binding protein PhnC (278 aa).

One can recognise an ABC transporter domain in the interval 25–273; the sequence is LAVKGLVKAY…IIQDIYSDES (249 aa). Residue 58–65 coordinates ATP; it reads GRSGAGKS.

Belongs to the ABC transporter superfamily. Phosphonates importer (TC 3.A.1.9.1) family. In terms of assembly, the complex is composed of two ATP-binding proteins (PhnC), two transmembrane proteins (PhnE) and a solute-binding protein (PhnD).

It is found in the cell inner membrane. The enzyme catalyses phosphonate(out) + ATP + H2O = phosphonate(in) + ADP + phosphate + H(+). Part of the ABC transporter complex PhnCDE involved in phosphonates import. Responsible for energy coupling to the transport system. The chain is Phosphonates import ATP-binding protein PhnC from Yersinia pestis bv. Antiqua (strain Antiqua).